Here is a 272-residue protein sequence, read N- to C-terminus: Dihydropteroate synthase (272 aa).

The Pterin-binding domain maps to 1-256 (MIKTKIMGIL…NVLLNTRLAQ (256 aa)). Mg(2+) is bound at residue Asn11. Residues Thr51, Asp89, Asn108, Asp172, Lys208, and 244 to 246 (RVH) contribute to the (7,8-dihydropterin-6-yl)methyl diphosphate site.

This sequence belongs to the DHPS family. As to quaternary structure, homodimer. Mg(2+) serves as cofactor.

It catalyses the reaction (7,8-dihydropterin-6-yl)methyl diphosphate + 4-aminobenzoate = 7,8-dihydropteroate + diphosphate. The protein operates within cofactor biosynthesis; tetrahydrofolate biosynthesis; 7,8-dihydrofolate from 2-amino-4-hydroxy-6-hydroxymethyl-7,8-dihydropteridine diphosphate and 4-aminobenzoate: step 1/2. Its function is as follows. Catalyzes the condensation of para-aminobenzoate (pABA) with 6-hydroxymethyl-7,8-dihydropterin diphosphate (DHPt-PP) to form 7,8-dihydropteroate (H2Pte), the immediate precursor of folate derivatives. This is Dihydropteroate synthase (folP) from Staphylococcus epidermidis (strain ATCC 12228 / FDA PCI 1200).